Here is a 136-residue protein sequence, read N- to C-terminus: Nucleoside diphosphate kinase (136 aa).

Residues Lys10, Phe58, Arg86, Thr92, Arg104, and Asn114 each coordinate ATP. His117 serves as the catalytic Pros-phosphohistidine intermediate.

This sequence belongs to the NDK family. As to quaternary structure, homotetramer. Requires Mg(2+) as cofactor.

The protein resides in the cytoplasm. The catalysed reaction is a 2'-deoxyribonucleoside 5'-diphosphate + ATP = a 2'-deoxyribonucleoside 5'-triphosphate + ADP. It catalyses the reaction a ribonucleoside 5'-diphosphate + ATP = a ribonucleoside 5'-triphosphate + ADP. Major role in the synthesis of nucleoside triphosphates other than ATP. The ATP gamma phosphate is transferred to the NDP beta phosphate via a ping-pong mechanism, using a phosphorylated active-site intermediate. This chain is Nucleoside diphosphate kinase, found in Mycobacteroides abscessus (strain ATCC 19977 / DSM 44196 / CCUG 20993 / CIP 104536 / JCM 13569 / NCTC 13031 / TMC 1543 / L948) (Mycobacterium abscessus).